The sequence spans 262 residues: Global transcriptional regulator CodY (262 aa).

Residues 1–159 (MAHLLEKTRK…ASTVVGIQLL (159 aa)) form a GAF domain region. Positions 207-226 (ASVIADRIGITRSVIVNALR) form a DNA-binding region, H-T-H motif.

Belongs to the CodY family.

The protein localises to the cytoplasm. DNA-binding global transcriptional regulator which is involved in the adaptive response to starvation and acts by directly or indirectly controlling the expression of numerous genes in response to nutrient availability. During rapid exponential growth, CodY is highly active and represses genes whose products allow adaptation to nutrient depletion. The polypeptide is Global transcriptional regulator CodY (Streptococcus pneumoniae (strain ATCC BAA-255 / R6)).